Reading from the N-terminus, the 158-residue chain is Transcription elongation factor GreA (158 aa).

Residues 53–73 (EQQSFIEGRIQEIEGKLSNAQ) are a coiled coil.

The protein belongs to the GreA/GreB family.

Functionally, necessary for efficient RNA polymerase transcription elongation past template-encoded arresting sites. The arresting sites in DNA have the property of trapping a certain fraction of elongating RNA polymerases that pass through, resulting in locked ternary complexes. Cleavage of the nascent transcript by cleavage factors such as GreA or GreB allows the resumption of elongation from the new 3'terminus. GreA releases sequences of 2 to 3 nucleotides. The polypeptide is Transcription elongation factor GreA (Halorhodospira halophila (strain DSM 244 / SL1) (Ectothiorhodospira halophila (strain DSM 244 / SL1))).